A 193-amino-acid polypeptide reads, in one-letter code: Ganglioside GM2 activator (193 aa).

Residues Met1 to Pro20 form the signal peptide. Disulfide bonds link Cys39/Cys183, Cys99/Cys106, Cys112/Cys138, and Cys125/Cys136. Asn151 carries an N-linked (GlcNAc...) asparagine glycan.

As to expression, widely expressed. Most abundant in kidney and testis.

The protein resides in the lysosome. It catalyses the reaction cholesterol(in) = cholesterol(out). Functionally, binds gangliosides and stimulates ganglioside GM2 degradation. It stimulates only the breakdown of ganglioside GM2 and glycolipid GA2 by beta-hexosaminidase A. It extracts single GM2 molecules from membranes and presents them in soluble form to beta-hexosaminidase A for cleavage of N-acetyl-D-galactosamine and conversion to GM3. The large binding pocket can accommodate several single chain phospholipids and fatty acids, GM2A also exhibits some calcium-independent phospholipase activity. Has cholesterol transfer activity. The polypeptide is Ganglioside GM2 activator (Mus musculus (Mouse)).